The primary structure comprises 225 residues: GTP cyclohydrolase 1 (225 aa).

Over residues 1 to 12 (MERSKQSHDNQA) the composition is skewed to basic and acidic residues. Residues 1-59 (MERSKQSHDNQADSRPTTNESSLNGHFDGLVKKTPGMWDVKGRGTAGESSSHTGSSVVE) form a disordered region. Polar residues-rich tracts occupy residues 13 to 24 (DSRPTTNESSLN) and 47 to 58 (GESSSHTGSSVV). Zn(2+) is bound by residues Cys149, His152, and Cys220.

It belongs to the GTP cyclohydrolase I family. As to quaternary structure, toroid-shaped homodecamer, composed of two pentamers of five dimers.

It is found in the cytoplasm. The protein localises to the nucleus. The catalysed reaction is GTP + H2O = 7,8-dihydroneopterin 3'-triphosphate + formate + H(+). It functions in the pathway cofactor biosynthesis; 7,8-dihydroneopterin triphosphate biosynthesis; 7,8-dihydroneopterin triphosphate from GTP: step 1/1. Its activity is regulated as follows. GTP shows a positive allosteric effect, and tetrahydrobiopterin inhibits the enzyme activity. Zinc is required for catalytic activity. Inhibited by Mg(2+). In terms of biological role, may positively regulate nitric oxide synthesis in endothelial cells. May be involved in dopamine synthesis. May modify pain sensitivity and persistence. This Oncorhynchus mykiss (Rainbow trout) protein is GTP cyclohydrolase 1 (gch1).